A 378-amino-acid polypeptide reads, in one-letter code: Protein SLG1 (378 aa).

The signal sequence occupies residues 1 to 21 (MRPNKTSLLLALLSILSQANA). The region spanning 22–110 (YEYVNCFSSL…EDAYSVYQLD (89 aa)) is the WSC domain. Residues 22-264 (YEYVNCFSSL…THKKKANVGA (243 aa)) are Extracellular-facing. An N-linked (GlcNAc...) asparagine glycan is attached at asparagine 65. 2 disordered regions span residues 115–201 (SNSI…TSST) and 236–256 (QNSG…SKTH). Over residues 236-253 (QNSGSATGTAGSDSTSGS) the composition is skewed to low complexity. The helical transmembrane segment at 265-285 (IVGGVVGGVVGAVAIALCILL) threads the bilayer. Residues 286 to 378 (IVRHINMKRE…LTVVNPDEAD (93 aa)) lie on the Cytoplasmic side of the membrane. The interval 318–378 (ASSFSSNHGP…LTVVNPDEAD (61 aa)) is disordered. Low complexity predominate over residues 319–331 (SSFSSNHGPSSGS). A phosphoserine mark is found at serine 331 and serine 353.

Glycosylated. Phosphorylated. Phosphorylation serves a negative regulatory role.

It localises to the cell membrane. Plays a role during G1 to regulate entering or exiting the cell cycle. Involved in stress responses. Has a role in cell wall integrity signaling. Activates ROM1 or ROM2 catalyzed guanine nucleotide exchange toward RHO1. Important regulator of the actin cytoskeleton rearrangements in conditions of cell wall expansion and membrane stretching. Specifically required for the actin reorganization induced by hypo-osmotic shock. Multicopy suppressor of 1,3-beta-glucan synthase (GS). Activates GS upstream of RHO1. Acts positively on the PKC1-MAPK pathway. Activates transiently SLT2 during alkaline stress, which leads to an increase in the expression of several specific genes. This Saccharomyces cerevisiae (strain ATCC 204508 / S288c) (Baker's yeast) protein is Protein SLG1 (SLG1).